The sequence spans 404 residues: Translation initiation factor eIF2B subunit gamma (404 aa).

This sequence belongs to the eIF-2B gamma/epsilon subunits family. Component of the translation initiation factor 2B (eIF2B) complex which is a heterodecamer of two sets of five different subunits: alpha, beta, gamma, delta and epsilon. Subunits alpha, beta and delta comprise a regulatory subcomplex and subunits epsilon and gamma comprise a catalytic subcomplex. Within the complex, the hexameric regulatory complex resides at the center, with the two heterodimeric catalytic subcomplexes bound on opposite sides.

It is found in the cytoplasm. Its subcellular location is the cytosol. Its function is as follows. Acts as a component of the translation initiation factor 2B (eIF2B) complex, which catalyzes the exchange of GDP for GTP on the eukaryotic initiation factor 2 (eIF2) complex gamma subunit. Its guanine nucleotide exchange factor activity is repressed when bound to eIF2 complex phosphorylated on the alpha subunit, thereby limiting the amount of methionyl-initiator methionine tRNA available to the ribosome and consequently global translation is repressed. This is Translation initiation factor eIF2B subunit gamma from Caenorhabditis elegans.